We begin with the raw amino-acid sequence, 36 residues long: Putative DNA-binding protein inhibitor ID-2B (36 aa).

This chain is Putative DNA-binding protein inhibitor ID-2B (ID2B), found in Homo sapiens (Human).